A 222-amino-acid polypeptide reads, in one-letter code: GTP cyclohydrolase 1 (222 aa).

Positions 111, 114, and 182 each coordinate Zn(2+).

This sequence belongs to the GTP cyclohydrolase I family. As to quaternary structure, toroid-shaped homodecamer, composed of two pentamers of five dimers.

The enzyme catalyses GTP + H2O = 7,8-dihydroneopterin 3'-triphosphate + formate + H(+). The protein operates within cofactor biosynthesis; 7,8-dihydroneopterin triphosphate biosynthesis; 7,8-dihydroneopterin triphosphate from GTP: step 1/1. In Klebsiella pneumoniae subsp. pneumoniae (strain ATCC 700721 / MGH 78578), this protein is GTP cyclohydrolase 1.